Here is a 94-residue protein sequence, read N- to C-terminus: Large ribosomal subunit protein bL28 (94 aa).

This sequence belongs to the bacterial ribosomal protein bL28 family.

This chain is Large ribosomal subunit protein bL28, found in Novosphingobium aromaticivorans (strain ATCC 700278 / DSM 12444 / CCUG 56034 / CIP 105152 / NBRC 16084 / F199).